Here is a 120-residue protein sequence, read N- to C-terminus: MSKANTTNARRKNRVRMALRRTASGRPRLSVFRSSKHIYAQVIDDLKGVTLASASSLEKTMREAGNTGADIDAAKAVGKLLAERAVKNGVKEVVFDRGGYLYHGRIKALADAARESGLSF.

Belongs to the universal ribosomal protein uL18 family. Part of the 50S ribosomal subunit; part of the 5S rRNA/L5/L18/L25 subcomplex. Contacts the 5S and 23S rRNAs.

This is one of the proteins that bind and probably mediate the attachment of the 5S RNA into the large ribosomal subunit, where it forms part of the central protuberance. The sequence is that of Large ribosomal subunit protein uL18 from Rhodopseudomonas palustris (strain BisA53).